A 126-amino-acid polypeptide reads, in one-letter code: Phosphoribosyl-AMP cyclohydrolase (126 aa).

Asp76 is a binding site for Mg(2+). Residue Cys77 coordinates Zn(2+). Mg(2+) contacts are provided by Asp78 and Asp80. Zn(2+) contacts are provided by Cys94 and Cys101.

The protein belongs to the PRA-CH family. As to quaternary structure, homodimer. Requires Mg(2+) as cofactor. It depends on Zn(2+) as a cofactor.

It is found in the cytoplasm. The enzyme catalyses 1-(5-phospho-beta-D-ribosyl)-5'-AMP + H2O = 1-(5-phospho-beta-D-ribosyl)-5-[(5-phospho-beta-D-ribosylamino)methylideneamino]imidazole-4-carboxamide. The protein operates within amino-acid biosynthesis; L-histidine biosynthesis; L-histidine from 5-phospho-alpha-D-ribose 1-diphosphate: step 3/9. Its function is as follows. Catalyzes the hydrolysis of the adenine ring of phosphoribosyl-AMP. The chain is Phosphoribosyl-AMP cyclohydrolase from Vesicomyosocius okutanii subsp. Calyptogena okutanii (strain HA).